The following is a 207-amino-acid chain: Large ribosomal subunit protein uL4 (207 aa).

Residues 49–78 form a disordered region; the sequence is HAVKNRSAVSGGGRKPWRQKGTGRARQGSI.

This sequence belongs to the universal ribosomal protein uL4 family. In terms of assembly, part of the 50S ribosomal subunit.

Functionally, one of the primary rRNA binding proteins, this protein initially binds near the 5'-end of the 23S rRNA. It is important during the early stages of 50S assembly. It makes multiple contacts with different domains of the 23S rRNA in the assembled 50S subunit and ribosome. Forms part of the polypeptide exit tunnel. This is Large ribosomal subunit protein uL4 from Streptococcus pneumoniae serotype 2 (strain D39 / NCTC 7466).